The chain runs to 62 residues: Large ribosomal subunit protein eL24 (62 aa).

Zn(2+)-binding residues include C6, C9, C32, and C36. Residues 6–36 (CSFCEGTIEPGCGKKYVKKDGSVMHFCSSKC) form a C4-type zinc finger.

Belongs to the eukaryotic ribosomal protein eL24 family. As to quaternary structure, part of the 50S ribosomal subunit. Forms a cluster with proteins L3 and L14. Zn(2+) serves as cofactor.

Functionally, binds to the 23S rRNA. The sequence is that of Large ribosomal subunit protein eL24 from Methanococcus maripaludis (strain C7 / ATCC BAA-1331).